Consider the following 231-residue polypeptide: Large ribosomal subunit protein uL1 (231 aa).

This sequence belongs to the universal ribosomal protein uL1 family. As to quaternary structure, part of the 50S ribosomal subunit.

In terms of biological role, binds directly to 23S rRNA. The L1 stalk is quite mobile in the ribosome, and is involved in E site tRNA release. Functionally, protein L1 is also a translational repressor protein, it controls the translation of the L11 operon by binding to its mRNA. This chain is Large ribosomal subunit protein uL1, found in Kosmotoga olearia (strain ATCC BAA-1733 / DSM 21960 / TBF 19.5.1).